The following is a 91-amino-acid chain: Transcription factor ILI7 (91 aa).

Residues 4–58 (RSRSRASSAARITDEQIGDLVSKLQALLPEARLRSNDRVPSARVLQETCSYIRSL) enclose the bHLH domain.

This sequence belongs to the bHLH protein family.

In terms of biological role, atypical and probable non DNA-binding bHLH transcription factor that integrates multiple signaling pathways to regulate cell elongation and plant development. The chain is Transcription factor ILI7 (ILI7) from Oryza sativa subsp. indica (Rice).